Reading from the N-terminus, the 282-residue chain is NADPH-dependent 7-cyano-7-deazaguanine reductase (282 aa).

Substrate is bound at residue 88–90; it reads IES. An NADPH-binding site is contributed by 90-91; that stretch reads SK. The active-site Thioimide intermediate is Cys190. Asp197 acts as the Proton donor in catalysis. 229–230 is a substrate binding site; that stretch reads HE. Position 258–259 (258–259) interacts with NADPH; it reads RG.

The protein belongs to the GTP cyclohydrolase I family. QueF type 2 subfamily. Homodimer.

It is found in the cytoplasm. The enzyme catalyses 7-aminomethyl-7-carbaguanine + 2 NADP(+) = 7-cyano-7-deazaguanine + 2 NADPH + 3 H(+). It functions in the pathway tRNA modification; tRNA-queuosine biosynthesis. Functionally, catalyzes the NADPH-dependent reduction of 7-cyano-7-deazaguanine (preQ0) to 7-aminomethyl-7-deazaguanine (preQ1). The protein is NADPH-dependent 7-cyano-7-deazaguanine reductase of Escherichia coli (strain UTI89 / UPEC).